A 338-amino-acid chain; its full sequence is Solute carrier family 35 member G5 (338 aa).

The disordered stretch occupies residues 1–27 (MAGSHPYFNLPDSTHPSPPSAPPSLRW). Transmembrane regions (helical) follow at residues 37-57 (TNGLLVALLGGGLPAGFVGPL), 67-87 (LPSLELLICRCLFHLPIALLL), 102-122 (GWACFCALLNVLSIGCAYSAV), 160-180 (CGLLGSILGLIIILGPGLWTL), 190-210 (TLGYVQAFLGGLALSLGLLVY), 221-241 (TVAFLSGLVGLLGCVPGLFVL), 250-270 (LLSWSCVGAEGILALVSFTCV), 281-301 (LVCAVLHSEVVVALILQYYML), and 305-325 (VALSDIMGAGVVLGSIAIITA). The EamA 1 domain occupies 49-174 (LPAGFVGPLS…SILGLIIILG (126 aa)). Residues 272–325 (YAVTKAHPALVCAVLHSEVVVALILQYYMLHETVALSDIMGAGVVLGSIAIITA) enclose the EamA 2 domain.

The protein belongs to the SLC35G solute transporter family. In terms of tissue distribution, expressed in placenta and testis.

It is found in the membrane. The polypeptide is Solute carrier family 35 member G5 (SLC35G5) (Homo sapiens (Human)).